The sequence spans 715 residues: Bromodomain-containing protein DDB_G0278469 (715 aa).

2 disordered regions span residues 18–46 (EDNN…NRNA) and 186–425 (QQQK…ETKQ). Low complexity-rich tracts occupy residues 20–45 (NNNN…PNRN), 186–204 (QQQK…PTAQ), 215–227 (LTAA…TTTT), 234–254 (TAPP…TTKK), and 261–281 (SKSN…TTIT). The span at 307–316 (KPKEQKKDIM) shows a compositional bias: basic and acidic residues. Residues 322–368 (SKKANTHEEKEEGESEEEEEEEEEEEEEEEEEEEEEQLEDKQKQTKT) adopt a coiled-coil conformation. Positions 332–359 (EEGESEEEEEEEEEEEEEEEEEEEEEQL) are enriched in acidic residues. Residues 366–389 (TKTPISQNKSASSNIKPLSKTSKS) are compositionally biased toward polar residues. Low complexity predominate over residues 405–414 (KKITSTTVTR). Residues 437 to 470 (KQQTQEEIEQELKLESIRKRIEQFINKFEKEIND) are a coiled coil. One can recognise a Bromo domain in the interval 474–599 (KDLDEGKRKI…IQFYKSLLET (126 aa)). Residues 653 to 715 (LVDEDEDECL…SEEEDQEATN (63 aa)) are disordered. Polar residues predominate over residues 662–672 (LNNQNNPTTYD). Acidic residues predominate over residues 684 to 715 (QESDEESDEESDEESDEERDQLSEEEDQEATN).

The polypeptide is Bromodomain-containing protein DDB_G0278469 (Dictyostelium discoideum (Social amoeba)).